The sequence spans 520 residues: 2-isopropylmalate synthase (520 aa).

The 263-residue stretch at Ile12 to Val274 folds into the Pyruvate carboxyltransferase domain. Positions 21, 209, 211, and 245 each coordinate Mn(2+). The segment at Arg396–Ala520 is regulatory domain.

The protein belongs to the alpha-IPM synthase/homocitrate synthase family. LeuA type 1 subfamily. As to quaternary structure, homodimer. The cofactor is Mn(2+).

It localises to the cytoplasm. The enzyme catalyses 3-methyl-2-oxobutanoate + acetyl-CoA + H2O = (2S)-2-isopropylmalate + CoA + H(+). Its pathway is amino-acid biosynthesis; L-leucine biosynthesis; L-leucine from 3-methyl-2-oxobutanoate: step 1/4. Functionally, catalyzes the condensation of the acetyl group of acetyl-CoA with 3-methyl-2-oxobutanoate (2-ketoisovalerate) to form 3-carboxy-3-hydroxy-4-methylpentanoate (2-isopropylmalate). The chain is 2-isopropylmalate synthase from Xanthomonas axonopodis pv. citri (strain 306).